Here is a 103-residue protein sequence, read N- to C-terminus: Small ribosomal subunit protein uS10 (103 aa).

Belongs to the universal ribosomal protein uS10 family. In terms of assembly, part of the 30S ribosomal subunit.

In terms of biological role, involved in the binding of tRNA to the ribosomes. The protein is Small ribosomal subunit protein uS10 of Pseudomonas savastanoi pv. phaseolicola (strain 1448A / Race 6) (Pseudomonas syringae pv. phaseolicola (strain 1448A / Race 6)).